We begin with the raw amino-acid sequence, 222 residues long: UPF0502 protein PBPRB0676 (222 aa).

It belongs to the UPF0502 family.

The protein is UPF0502 protein PBPRB0676 of Photobacterium profundum (strain SS9).